A 658-amino-acid chain; its full sequence is Interferon-induced GTP-binding protein Mx1 (658 aa).

N-acetylmethionine is present on Met-1. The interval 1–20 is disordered; it reads MVNSKGKITDSDPGSSHLLL. Residues 65–338 form the Dynamin-type G domain; the sequence is DLALPAIAVI…LITHICKTLP (274 aa). The interval 75-82 is G1 motif; sequence GDQSSGKS. 75-82 contacts GTP; the sequence is GDQSSGKS. Positions 100 to 102 are G2 motif; the sequence is VTR. The G3 motif stretch occupies residues 176–179; the sequence is DLPG. Residues 176–180 and 245–248 contribute to the GTP site; these read DLPGI and TKPD. Positions 245–248 are G4 motif; the sequence is TKPD. Residues 277–280 form a G5 motif region; that stretch reads KCRG. The interval 339–364 is bundle signaling element (BSE); it reads LLEKQIKENYEKITEELQKYGSDVPE. Positions 364–531 are middle domain; that stretch reads EEEHEKMFFL…HFQMEQIVYC (168 aa). The interval 365–628 is stalk; sequence EEHEKMFFLI…KDTHNWLLKE (264 aa). Residues 551–554 are critical for lipid-binding; it reads KDKK. A GED domain is found at 570–658; the sequence is LSDIFEHLLA…ARRRLAKFPG (89 aa).

The protein belongs to the TRAFAC class dynamin-like GTPase superfamily. Dynamin/Fzo/YdjA family. Homooligomer. Oligomerizes into multimeric filamentous or ring-like structures by virtue of its stalk domain. Oligomerization is critical for GTPase activity, protein stability, and recognition of viral target structures. Interacts with TRPC1, TRPC3, TRPC4, TRPC5, TRPC6 and TRPC7. Interacts with HSPA5. Interacts with TUBB/TUBB5. Interacts with DDX39A and DDX39B. In terms of processing, ISGylated.

It is found in the cytoplasm. Its subcellular location is the endoplasmic reticulum membrane. It localises to the perinuclear region. In terms of biological role, interferon-induced dynamin-like GTPase with antiviral activity. The protein is Interferon-induced GTP-binding protein Mx1 (MX1) of Otaria byronia (South American sea lion).